A 380-amino-acid polypeptide reads, in one-letter code: Anhydro-N-acetylmuramic acid kinase (380 aa).

Residue 17–24 (GTSMDGAD) participates in ATP binding.

The protein belongs to the anhydro-N-acetylmuramic acid kinase family.

The enzyme catalyses 1,6-anhydro-N-acetyl-beta-muramate + ATP + H2O = N-acetyl-D-muramate 6-phosphate + ADP + H(+). It participates in amino-sugar metabolism; 1,6-anhydro-N-acetylmuramate degradation. It functions in the pathway cell wall biogenesis; peptidoglycan recycling. Catalyzes the specific phosphorylation of 1,6-anhydro-N-acetylmuramic acid (anhMurNAc) with the simultaneous cleavage of the 1,6-anhydro ring, generating MurNAc-6-P. Is required for the utilization of anhMurNAc either imported from the medium or derived from its own cell wall murein, and thus plays a role in cell wall recycling. In Cupriavidus metallidurans (strain ATCC 43123 / DSM 2839 / NBRC 102507 / CH34) (Ralstonia metallidurans), this protein is Anhydro-N-acetylmuramic acid kinase.